We begin with the raw amino-acid sequence, 574 residues long: Arginine--tRNA ligase (574 aa).

The 'HIGH' region motif lies at 126–136 (PNIAKRMHVGH).

It belongs to the class-I aminoacyl-tRNA synthetase family. Monomer.

Its subcellular location is the cytoplasm. The catalysed reaction is tRNA(Arg) + L-arginine + ATP = L-arginyl-tRNA(Arg) + AMP + diphosphate. The sequence is that of Arginine--tRNA ligase from Chloroflexus aurantiacus (strain ATCC 29366 / DSM 635 / J-10-fl).